A 533-amino-acid chain; its full sequence is Glucose-6-phosphate isomerase (533 aa).

Glutamate 341 serves as the catalytic Proton donor. Catalysis depends on residues histidine 372 and lysine 501.

Belongs to the GPI family.

Its subcellular location is the cytoplasm. The enzyme catalyses alpha-D-glucose 6-phosphate = beta-D-fructose 6-phosphate. It participates in carbohydrate biosynthesis; gluconeogenesis. It functions in the pathway carbohydrate degradation; glycolysis; D-glyceraldehyde 3-phosphate and glycerone phosphate from D-glucose: step 2/4. In terms of biological role, catalyzes the reversible isomerization of glucose-6-phosphate to fructose-6-phosphate. This Cereibacter sphaeroides (strain ATCC 17025 / ATH 2.4.3) (Rhodobacter sphaeroides) protein is Glucose-6-phosphate isomerase.